The chain runs to 441 residues: Malate dehydrogenase [NADP], chloroplastic (441 aa).

A chloroplast-targeting transit peptide spans 1–51 (MAVAELSPSYKTQLKTCQQLSSSLSTRLSDHRKFSLRLLPRPVSVRGGIRC). A disulfide bridge links Cys-75 with Cys-80. 104-110 (GAAGMIS) is a binding site for NADP(+). Positions 185 and 191 each coordinate substrate. Residue Asn-198 participates in NADP(+) binding. Residue Gln-205 participates in NAD(+) binding. 222 to 224 (VGN) contacts NADP(+). Substrate is bound by residues Asn-224 and Arg-255. Catalysis depends on His-280, which acts as the Proton acceptor. Cys-416 and Cys-428 are joined by a disulfide.

This sequence belongs to the LDH/MDH superfamily. MDH type 2 family. Homodimer.

It localises to the plastid. The protein localises to the chloroplast. The enzyme catalyses (S)-malate + NADP(+) = oxaloacetate + NADPH + H(+). Its activity is regulated as follows. Chloroplast NADP-MDH is activated upon illumination. In order to be enzymatically active, disulfide bridges on the protein must be reduced by thioredoxin which receives electrons from ferredoxin and the electron transport system of photosynthesis. Functionally, the chloroplastic, NADP-dependent form is essential for the photosynthesis C4 cycle, which allows plants to circumvent the problem of photorespiration. In C4 plants, NADP-MDH activity acts to convert oxaloacetate to malate in chloroplasts of mesophyll cells for transport to the bundle sheath cells. The chain is Malate dehydrogenase [NADP], chloroplastic (MDH1) from Mesembryanthemum crystallinum (Common ice plant).